Consider the following 431-residue polypeptide: UPF0597 protein TDE_2144 (431 aa).

Belongs to the UPF0597 family.

The sequence is that of UPF0597 protein TDE_2144 from Treponema denticola (strain ATCC 35405 / DSM 14222 / CIP 103919 / JCM 8153 / KCTC 15104).